Reading from the N-terminus, the 324-residue chain is Anthranilate phosphoribosyltransferase (324 aa).

Residues G72, 75 to 76 (GD), S80, 82 to 85 (NVST), 99 to 107 (KHGNVSITS), and S111 contribute to the 5-phospho-alpha-D-ribose 1-diphosphate site. An anthranilate-binding site is contributed by G72. Mg(2+) is bound at residue S84. N102 provides a ligand contact to anthranilate. R157 serves as a coordination point for anthranilate. Mg(2+) is bound by residues D215 and E216.

This sequence belongs to the anthranilate phosphoribosyltransferase family. Homodimer. It depends on Mg(2+) as a cofactor.

The catalysed reaction is N-(5-phospho-beta-D-ribosyl)anthranilate + diphosphate = 5-phospho-alpha-D-ribose 1-diphosphate + anthranilate. Its pathway is amino-acid biosynthesis; L-tryptophan biosynthesis; L-tryptophan from chorismate: step 2/5. Catalyzes the transfer of the phosphoribosyl group of 5-phosphorylribose-1-pyrophosphate (PRPP) to anthranilate to yield N-(5'-phosphoribosyl)-anthranilate (PRA). The sequence is that of Anthranilate phosphoribosyltransferase from Pyrococcus abyssi (strain GE5 / Orsay).